A 98-amino-acid chain; its full sequence is Large ribosomal subunit protein mL53 (98 aa).

Belongs to the mitochondrion-specific ribosomal protein mL53 family. In terms of assembly, component of the mitochondrial large ribosomal subunit (mt-LSU). Mature N.crassa 74S mitochondrial ribosomes consist of a small (37S) and a large (54S) subunit. The 37S small subunit contains a 16S ribosomal RNA (16S mt-rRNA) and 32 different proteins. The 54S large subunit contains a 23S rRNA (23S mt-rRNA) and 42 different proteins.

The protein resides in the mitochondrion. Component of the mitochondrial ribosome (mitoribosome), a dedicated translation machinery responsible for the synthesis of mitochondrial genome-encoded proteins, including at least some of the essential transmembrane subunits of the mitochondrial respiratory chain. The mitoribosomes are attached to the mitochondrial inner membrane and translation products are cotranslationally integrated into the membrane. This is Large ribosomal subunit protein mL53 (mrpl44) from Neurospora crassa (strain ATCC 24698 / 74-OR23-1A / CBS 708.71 / DSM 1257 / FGSC 987).